Reading from the N-terminus, the 352-residue chain is Heat-inducible transcription repressor HrcA (352 aa).

This sequence belongs to the HrcA family.

Functionally, negative regulator of class I heat shock genes (grpE-dnaK-dnaJ and groELS operons). Prevents heat-shock induction of these operons. In Prochlorococcus marinus (strain MIT 9313), this protein is Heat-inducible transcription repressor HrcA.